A 255-amino-acid polypeptide reads, in one-letter code: Small ribosomal subunit protein uS2 (255 aa).

Residues 232-255 (ASGRDIGASEEAPIEPALEDEAGA) are disordered.

This sequence belongs to the universal ribosomal protein uS2 family.

The protein is Small ribosomal subunit protein uS2 of Agrobacterium fabrum (strain C58 / ATCC 33970) (Agrobacterium tumefaciens (strain C58)).